A 210-amino-acid polypeptide reads, in one-letter code: Prolactin (210 aa).

An N-terminal signal peptide occupies residues 1–23; the sequence is MARRSQGTKLHLAVLCLVVSCHA. 2 disulfide bridges follow: Cys-69–Cys-183 and Cys-200–Cys-210.

It belongs to the somatotropin/prolactin family. As to expression, pituitary gland.

Its subcellular location is the secreted. The chain is Prolactin (prl) from Coregonus autumnalis (Arctic cisco).